The following is a 375-amino-acid chain: Lipid-A-disaccharide synthase (375 aa).

It belongs to the LpxB family.

It carries out the reaction a lipid X + a UDP-2-N,3-O-bis[(3R)-3-hydroxyacyl]-alpha-D-glucosamine = a lipid A disaccharide + UDP + H(+). The protein operates within bacterial outer membrane biogenesis; LPS lipid A biosynthesis. Functionally, condensation of UDP-2,3-diacylglucosamine and 2,3-diacylglucosamine-1-phosphate to form lipid A disaccharide, a precursor of lipid A, a phosphorylated glycolipid that anchors the lipopolysaccharide to the outer membrane of the cell. In Pseudomonas putida (strain W619), this protein is Lipid-A-disaccharide synthase.